The sequence spans 313 residues: Ankyrin repeat family A protein 2 (313 aa).

5 ANK repeats span residues 148–180 (ANSL…HTDE), 181–213 (EGFT…LLGK), 214–246 (GRES…EYDW), 247–279 (NGGT…IETD), and 280–313 (SGYN…NIKE).

Interacts (via ANK repeats) with CCDC8 (via PxLPxI/L motif); mediates the interaction with the 3M complex which is composed of CCDC8, CUL7 and OBSL1. Interacts (via ANK repeats) with HDAC4 (via PxLPxI/L motif). Interacts (via ANK repeats) with HDAC5 (via PxLPxI/L motif). Interacts (via ANK repeats) with LRP2/megalin (via PxLPxI/L motif). Interacts (via ANK repeats) with RFX7 (via PxLPxI/L motif). Interacts with AHRR. Interacts with NEK6.

It is found in the cytoplasm. The protein resides in the cytoskeleton. Its subcellular location is the membrane. Functionally, may regulate the interaction between the 3M complex and the histone deacetylases HDAC4 and HDAC5. May also regulate LRP2/megalin. The protein is Ankyrin repeat family A protein 2 (ANKRA2) of Homo sapiens (Human).